We begin with the raw amino-acid sequence, 158 residues long: Cyclic pyranopterin monophosphate synthase (158 aa).

Substrate is bound by residues 76–78 (LCH) and 114–115 (ME). Asp-129 is an active-site residue.

The protein belongs to the MoaC family. As to quaternary structure, homohexamer; trimer of dimers.

The catalysed reaction is (8S)-3',8-cyclo-7,8-dihydroguanosine 5'-triphosphate = cyclic pyranopterin phosphate + diphosphate. It functions in the pathway cofactor biosynthesis; molybdopterin biosynthesis. In terms of biological role, catalyzes the conversion of (8S)-3',8-cyclo-7,8-dihydroguanosine 5'-triphosphate to cyclic pyranopterin monophosphate (cPMP). This is Cyclic pyranopterin monophosphate synthase from Shewanella loihica (strain ATCC BAA-1088 / PV-4).